The chain runs to 198 residues: Pyridoxine/pyridoxamine 5'-phosphate oxidase (198 aa).

Residues 47–52 (RMVLVK), 62–63 (FT), arginine 68, lysine 69, and glutamine 91 contribute to the FMN site. Lysine 52 serves as a coordination point for substrate. 3 residues coordinate substrate: tyrosine 109, arginine 113, and serine 117. FMN contacts are provided by residues 126–127 (QS) and tryptophan 171. 177–179 (RLH) is a binding site for substrate. Arginine 181 provides a ligand contact to FMN.

Belongs to the pyridoxamine 5'-phosphate oxidase family. As to quaternary structure, homodimer. Requires FMN as cofactor.

It carries out the reaction pyridoxamine 5'-phosphate + O2 + H2O = pyridoxal 5'-phosphate + H2O2 + NH4(+). The catalysed reaction is pyridoxine 5'-phosphate + O2 = pyridoxal 5'-phosphate + H2O2. The protein operates within cofactor metabolism; pyridoxal 5'-phosphate salvage; pyridoxal 5'-phosphate from pyridoxamine 5'-phosphate: step 1/1. It participates in cofactor metabolism; pyridoxal 5'-phosphate salvage; pyridoxal 5'-phosphate from pyridoxine 5'-phosphate: step 1/1. Catalyzes the oxidation of either pyridoxine 5'-phosphate (PNP) or pyridoxamine 5'-phosphate (PMP) into pyridoxal 5'-phosphate (PLP). In Anaeromyxobacter dehalogenans (strain 2CP-C), this protein is Pyridoxine/pyridoxamine 5'-phosphate oxidase.